The sequence spans 608 residues: Threonine--tRNA ligase (608 aa).

The interval 1 to 145 is editing domain; sequence MKTLLIHAKH…TIKPGRRVRP (145 aa). Catalytic stretches follow at residues 192 to 489 and 193 to 489; these read PKYL…PSLP and KYLE…PSLP. Zn(2+)-binding residues include Cys286, His337, and His458.

The protein belongs to the class-II aminoacyl-tRNA synthetase family. Homodimer. The cofactor is Zn(2+).

Its subcellular location is the cytoplasm. The catalysed reaction is tRNA(Thr) + L-threonine + ATP = L-threonyl-tRNA(Thr) + AMP + diphosphate + H(+). In terms of biological role, catalyzes the attachment of threonine to tRNA(Thr) in a two-step reaction: L-threonine is first activated by ATP to form Thr-AMP and then transferred to the acceptor end of tRNA(Thr). Also edits incorrectly charged L-seryl-tRNA(Thr). In Thermofilum pendens (strain DSM 2475 / Hrk 5), this protein is Threonine--tRNA ligase.